Here is a 468-residue protein sequence, read N- to C-terminus: UDP-N-acetylmuramate--L-alanine ligase (468 aa).

Position 114-120 (114-120) interacts with ATP; sequence GTHGKTT.

It belongs to the MurCDEF family.

The protein localises to the cytoplasm. It catalyses the reaction UDP-N-acetyl-alpha-D-muramate + L-alanine + ATP = UDP-N-acetyl-alpha-D-muramoyl-L-alanine + ADP + phosphate + H(+). The protein operates within cell wall biogenesis; peptidoglycan biosynthesis. In terms of biological role, cell wall formation. The sequence is that of UDP-N-acetylmuramate--L-alanine ligase from Brucella anthropi (strain ATCC 49188 / DSM 6882 / CCUG 24695 / JCM 21032 / LMG 3331 / NBRC 15819 / NCTC 12168 / Alc 37) (Ochrobactrum anthropi).